Reading from the N-terminus, the 466-residue chain is MALALIHPSKRAYSLAPLNLKEELQGFKVQGDRKGVGQEPLCKQFRQLRYEESTGPREVLRRLRELCRQWLRPETHSKEQILELLVLEQFLTILPRDLQVQVLEHHPETGEELVGILEDLQLDRGKAGEQKDSAQRSRPTVLVGEPAPRREAREQPGCALPQKPEERGKETRSENGNLIAGTDSCGRMESSCTMTEPIEAQCEDLSLKKNPAMPKEKTNSQCLETKERLVQNSGLIEHDRAHTGEMSWESVGSQSSVAADHQEISKDKGHPCQECGKVFQRSSHLIRHQKIHLGEKPYQCKECGKVFSQNAGLLEHLRIHTGEKPYLCIHCGKNFRRSSHLNRHQKIHSQDEPRECKECGKTFSRALLLTHHQRVHGRSKRHHCNECGKAFSLTSDLIRHHRIHTGEKPFKCNVCQKAFRLNSHLDQHVRIHNEEKPYKCSECNEAFRQKSGLFQHQRHHHKSKLA.

Residue lysine 21 forms a Glycyl lysine isopeptide (Lys-Gly) (interchain with G-Cter in SUMO2) linkage. Residues 42-124 form the SCAN box domain; the sequence is CKQFRQLRYE…GILEDLQLDR (83 aa). Basic and acidic residues-rich tracts occupy residues 124-135 and 163-173; these read RGKAGEQKDSAQ and KPEERGKETRS. The interval 124–182 is disordered; sequence RGKAGEQKDSAQRSRPTVLVGEPAPRREAREQPGCALPQKPEERGKETRSENGNLIAGT. The C2H2-type 1; degenerate zinc-finger motif lies at 220-242; it reads SQCLETKERLVQNSGLIEHDRAH. 7 C2H2-type zinc fingers span residues 270 to 292, 298 to 320, 326 to 348, 354 to 376, 382 to 404, 410 to 432, and 438 to 460; these read HPCQ…QKIH, YQCK…LRIH, YLCI…QKIH, RECK…QRVH, HHCN…HRIH, FKCN…VRIH, and YKCS…QRHH.

The protein resides in the nucleus. In terms of biological role, may be involved in transcriptional regulation. In Mus musculus (Mouse), this protein is Zinc finger and SCAN domain-containing protein 26 (Zscan26).